The following is a 910-amino-acid chain: Valine--tRNA ligase (910 aa).

The 'HIGH' region motif lies at 46-56 (PNVTGSLHMGH). The short motif at 539 to 543 (KMSKS) is the 'KMSKS' region element. Lys-542 contributes to the ATP binding site. Residues 845-909 (DLDILRNKIQ…QMLQERLKML (65 aa)) are a coiled coil.

It belongs to the class-I aminoacyl-tRNA synthetase family. ValS type 1 subfamily. In terms of assembly, monomer.

The protein resides in the cytoplasm. It catalyses the reaction tRNA(Val) + L-valine + ATP = L-valyl-tRNA(Val) + AMP + diphosphate. In terms of biological role, catalyzes the attachment of valine to tRNA(Val). As ValRS can inadvertently accommodate and process structurally similar amino acids such as threonine, to avoid such errors, it has a 'posttransfer' editing activity that hydrolyzes mischarged Thr-tRNA(Val) in a tRNA-dependent manner. This Synechocystis sp. (strain ATCC 27184 / PCC 6803 / Kazusa) protein is Valine--tRNA ligase.